The chain runs to 469 residues: Adenosylhomocysteinase (469 aa).

Residues Thr63, Asp139, and Glu164 each contribute to the substrate site. 165-167 (TTT) contributes to the NAD(+) binding site. Substrate-binding residues include Lys194 and Asp198. Residues Asn199, 228 to 233 (GYGDVG), Glu251, Asn300, 321 to 323 (IGH), and Asn375 contribute to the NAD(+) site.

The protein belongs to the adenosylhomocysteinase family. Requires NAD(+) as cofactor.

It localises to the cytoplasm. The enzyme catalyses S-adenosyl-L-homocysteine + H2O = L-homocysteine + adenosine. The protein operates within amino-acid biosynthesis; L-homocysteine biosynthesis; L-homocysteine from S-adenosyl-L-homocysteine: step 1/1. May play a key role in the regulation of the intracellular concentration of adenosylhomocysteine. The protein is Adenosylhomocysteinase of Pseudomonas syringae pv. syringae (strain B728a).